The primary structure comprises 181 residues: Trans-acting factor D (181 aa).

Plays a role in 2-micron plasmid partitioning. Antagonizes transcriptional repression of recombinase FLP by REP1-REP2. Regulates both stability and copy number of the plasmid by blocking the formation of the REP1-REP2 repressor complex. The polypeptide is Trans-acting factor D (Saccharomyces cerevisiae (strain ATCC 204508 / S288c) (Baker's yeast)).